We begin with the raw amino-acid sequence, 119 residues long: Hydrogenase maturation factor HypA (119 aa).

His-2 provides a ligand contact to Ni(2+). Residues Cys-73, Cys-76, Cys-89, and Cys-92 each coordinate Zn(2+).

It belongs to the HypA/HybF family.

Its function is as follows. Involved in the maturation of [NiFe] hydrogenases. Required for nickel insertion into the metal center of the hydrogenase. This chain is Hydrogenase maturation factor HypA, found in Dehalococcoides mccartyi (strain ATCC BAA-2266 / KCTC 15142 / 195) (Dehalococcoides ethenogenes (strain 195)).